Here is a 220-residue protein sequence, read N- to C-terminus: Small ribosomal subunit protein mS42 (220 aa).

Belongs to the mitochondrion-specific ribosomal protein mS42 family. Component of the mitochondrial small ribosomal subunit (mt-SSU). Mature yeast 74S mitochondrial ribosomes consist of a small (37S) and a large (54S) subunit. The 37S small subunit contains a 15S ribosomal RNA (15S mt-rRNA) and at least 32 different proteins. The 54S large subunit contains a 21S rRNA (21S mt-rRNA) and at least 45 different proteins. mS43 forms a dimer with mS42, building a large protuberance adjacent to the mRNA channel exit in the mt-SSU body.

It is found in the mitochondrion. Component of the mitochondrial ribosome (mitoribosome), a dedicated translation machinery responsible for the synthesis of mitochondrial genome-encoded proteins, including at least some of the essential transmembrane subunits of the mitochondrial respiratory chain. The mitoribosomes are attached to the mitochondrial inner membrane and translation products are cotranslationally integrated into the membrane. This Schizosaccharomyces pombe (strain 972 / ATCC 24843) (Fission yeast) protein is Small ribosomal subunit protein mS42.